A 414-amino-acid chain; its full sequence is Methanesulfonate monooxygenase hydroxylase subunit alpha (414 aa).

The 120-residue stretch at 44–163 (WVPFRHESEL…CEVKFGGFVW (120 aa)) folds into the Rieske domain. Positions 86, 88, 115, and 118 each coordinate [2Fe-2S] cluster. His-225 provides a ligand contact to Fe cation.

It belongs to the bacterial ring-hydroxylating dioxygenase alpha subunit family. As to quaternary structure, the MSA monooxygenase system consists of 4 proteins: the 2 subunits of the hydroxylase component (MsmA and MsmB), a ferredoxin (MsmC) and a ferredoxin reductase (MsmD). The hydroxylase component consists of a 3 alpha (MsmA) and 3 beta (MsmB) subunits. It depends on [2Fe-2S] cluster as a cofactor. Fe cation is required as a cofactor.

Its subcellular location is the cytoplasm. It carries out the reaction methanesulfonate + NADH + O2 = sulfite + formaldehyde + NAD(+) + H2O. Its activity is regulated as follows. MSAMO is inhibited by metal chelators (such as bathophenanthroline, bathocuprione, neocuprione, alpha-alpha-dipyridil and sodium EDTA) and by sodium azide, sodium arsenate and potassium cyanide. Its function is as follows. Methanesulfonate monooxygenase (MSAMO) mediates the primary degradation of methanesulfonic acid (MSA) to produce formaldehyd and inorganic sulfite by initial hydroxylation of the carbon atom prior to spontaneous cleavage of the unstable hydroxymethanesulfonic acid. MSAMO has a restricted substrate range that includes only the short-chain aliphatic sulfonates (methane- to butanesulfonate) and excludes all larger molecules, such as arylsulfonates and aromatic sulfonates. All MSAMO components are required for enzyme activity. This is Methanesulfonate monooxygenase hydroxylase subunit alpha from Methylosulfonomonas methylovora.